A 1031-amino-acid chain; its full sequence is MMS19 nucleotide excision repair protein homolog (1031 aa).

An N-acetylalanine modification is found at Ala2. HEAT repeat units lie at residues 867-905, 909-947, 950-988, and 991-1029; these read QRFF…RLPK, LPEL…EAPQ, SLHV…LPTS, and LPYK…LGSP. Residue Ser1028 is modified to Phosphoserine.

The protein belongs to the MET18/MMS19 family. Component of the CIA complex. In the CIA complex, interacts directly with CIAO2B and CIAO3. Component of the MMXD complex, composed of CIAO1, ERCC2, CIAO2B, MMS19 and SLC25A5. Interacts with CIAO2B; the interaction is direct. Interacts with ERCC2/XPD; the interaction is direct. Interacts with ERCC3/XPB and NCOA3/RAC3. Interacts with RTEL1; the interaction mediates the association of RTEL1 with the CIA complex. Interacts with BRIP1. Interacts with KIF4A; the interaction facilitates the transfer of Fe-S clusters to KIF4A to ensure proper localization of KIF4A to the mitotic machinery components. Interacts with CCDC117; the interaction is indirect. Ubiquitinated; undergoes 'Lys-48'-linked polyubiquitination. Ubiquitously expressed with higher expression in testis.

It is found in the nucleus. The protein localises to the cytoplasm. Its subcellular location is the cytoskeleton. It localises to the spindle. Its function is as follows. Key component of the cytosolic iron-sulfur protein assembly (CIA) complex, a multiprotein complex that mediates the incorporation of iron-sulfur cluster into apoproteins specifically involved in DNA metabolism and genomic integrity. In the CIA complex, MMS19 acts as an adapter between early-acting CIA components and a subset of cellular target Fe/S proteins such as ERCC2/XPD, FANCJ and RTEL1, thereby playing a key role in nucleotide excision repair (NER), homologous recombination-mediated double-strand break DNA repair, DNA replication and RNA polymerase II (POL II) transcription. As a CIA complex component and in collaboration with CIAO1 and CIAO2, binds to and facilitates the assembly of most cytosolic-nuclear Fe/S proteins. As part of the mitotic spindle-associated MMXD complex, plays a role in chromosome segregation, probably by facilitating iron-sulfur cluster assembly into ERCC2/XPD. Together with CIAO2, facilitates the transfer of Fe-S clusters to the motor protein KIF4A, which ensures proper localization of KIF4A to mitotic machinery components to promote the progression of mitosis. Indirectly acts as a transcriptional coactivator of estrogen receptor (ER), via its role in iron-sulfur insertion into some component of the TFIIH-machinery. The chain is MMS19 nucleotide excision repair protein homolog from Mus musculus (Mouse).